The chain runs to 406 residues: Membrane protein UL43 homolog (406 aa).

10 helical membrane passes run 48-68 (LFLV…QYHV), 71-91 (AAVN…PTSV), 103-123 (CLQT…CPIS), 126-146 (LPFV…VAAV), 162-182 (IYFY…VILY), 188-208 (YEVL…VDAA), 266-286 (SVIP…SHII), 299-319 (LAVS…AVLY), 339-359 (IAVT…STVA), and 386-406 (VYHV…TYVS).

Belongs to the alphaherpesvirinae HHV-1 UL43 family.

The protein localises to the membrane. The polypeptide is Membrane protein UL43 homolog (Varicella-zoster virus (strain Dumas) (HHV-3)).